The sequence spans 88 residues: Gene 85 protein (88 aa).

The protein is Gene 85 protein (85) of Mycobacterium phage L5 (Mycobacteriophage L5).